We begin with the raw amino-acid sequence, 198 residues long: UPF0215 protein NEQ431 (198 aa).

Positions 179–198 (TKGDSSKPRAGGDSNPGPAG) are disordered.

The protein belongs to the UPF0215 family.

The polypeptide is UPF0215 protein NEQ431 (Nanoarchaeum equitans (strain Kin4-M)).